We begin with the raw amino-acid sequence, 235 residues long: Large ribosomal subunit protein uL1 (235 aa).

Belongs to the universal ribosomal protein uL1 family. As to quaternary structure, part of the 50S ribosomal subunit.

Functionally, binds directly to 23S rRNA. The L1 stalk is quite mobile in the ribosome, and is involved in E site tRNA release. In terms of biological role, protein L1 is also a translational repressor protein, it controls the translation of the L11 operon by binding to its mRNA. The chain is Large ribosomal subunit protein uL1 from Desulfotalea psychrophila (strain LSv54 / DSM 12343).